The sequence spans 332 residues: MSASYWDSSQRNKWQYSRESLARTRQKLWMLECQLYPQGTNILMEGGGKDAQPVTKNIPITHRDLHYDRDYNLRIYCYFLIMKLGRRLNVRQYALATAHVYLARFCLKASIREVNLYLLVTTCIYLACKVEECPQHIRTLVNEARSLWPEFVPPDPTKVTEFEFYLIEELQSYMIVHYPYRAMEQIAAALRRPPYNLVLSPDDLQNSWSLINDSYITDVHLLYPPHVIAMACLFITVCLRSAAGARDLQETFNRFMADSQVDLHEVMDTIQDFITLYDHWDKYNEPWIKFLLHNLYLRPHAGGTTVSGAAAGSAGPAGSVLTPNGTITGSTS.

Positions 74 to 175 (RIYCYFLIMK…LIEELQSYMI (102 aa)) constitute a Cyclin N-terminal domain.

The protein belongs to the cyclin family. Cyclin C subfamily. Component of the SRB8-11 complex, a regulatory module of the Mediator complex.

Its subcellular location is the nucleus. Component of the SRB8-11 complex. The SRB8-11 complex is a regulatory module of the Mediator complex which is itself involved in regulation of basal and activated RNA polymerase II-dependent transcription. The SRB8-11 complex may be involved in the transcriptional repression of a subset of genes regulated by Mediator. It may inhibit the association of the Mediator complex with RNA polymerase II to form the holoenzyme complex. The SRB8-11 complex phosphorylates the C-terminal domain (CTD) of the largest subunit of RNA polymerase II. The sequence is that of RNA polymerase II holoenzyme cyclin-like subunit (SSN8) from Eremothecium gossypii (strain ATCC 10895 / CBS 109.51 / FGSC 9923 / NRRL Y-1056) (Yeast).